A 386-amino-acid polypeptide reads, in one-letter code: GTPase Obg (386 aa).

Residues 4–162 form the Obg domain; the sequence is SNFVDYVKIY…MTVILELKLL (159 aa). The segment at 18 to 45 is disordered; the sequence is KGGRGSTHMRREKYTPNGGPDGGDGGRG. Residues 36 to 45 are compositionally biased toward gly residues; that stretch reads GPDGGDGGRG. The region spanning 163-329 is the OBG-type G domain; sequence ADVGLVGFPN…LKDILWTELN (167 aa). Residues 169–176, 194–198, 216–219, 283–286, and 310–312 contribute to the GTP site; these read GFPNAGKS, FTTLE, DIPG, TKSD, and SSV. Mg(2+) is bound by residues S176 and T196. The segment at 351 to 386 is disordered; the sequence is ELKDMGEDEELDYEYEDDGDEDDLDYEYEEEDWEDK. Residues 356-386 are compositionally biased toward acidic residues; the sequence is GEDEELDYEYEDDGDEDDLDYEYEEEDWEDK.

This sequence belongs to the TRAFAC class OBG-HflX-like GTPase superfamily. OBG GTPase family. In terms of assembly, monomer. Mg(2+) is required as a cofactor.

Its subcellular location is the cytoplasm. In terms of biological role, an essential GTPase which binds GTP, GDP and possibly (p)ppGpp with moderate affinity, with high nucleotide exchange rates and a fairly low GTP hydrolysis rate. Plays a role in control of the cell cycle, stress response, ribosome biogenesis and in those bacteria that undergo differentiation, in morphogenesis control. The sequence is that of GTPase Obg from Bacteroides fragilis (strain YCH46).